We begin with the raw amino-acid sequence, 397 residues long: SET domain-containing protein 4 (397 aa).

In terms of domain architecture, SET spans A29–G245. An S-adenosyl-L-methionine-binding site is contributed by Y244.

It belongs to the class V-like SAM-binding methyltransferase superfamily. SETD4 family.

The protein resides in the nucleus. It catalyses the reaction L-lysyl(79)-[histone H3] + 3 S-adenosyl-L-methionine = N(6),N(6),N(6)-trimethyl-L-lysyl(79)-[histone H3] + 3 S-adenosyl-L-homocysteine + 3 H(+). The enzyme catalyses L-lysyl(20)-[histone H4] + S-adenosyl-L-methionine = N(6)-methyl-L-lysyl(20)-[histone H4] + S-adenosyl-L-homocysteine + H(+). It carries out the reaction N(6)-methyl-L-lysyl(20)-[histone H4] + S-adenosyl-L-methionine = N(6),N(6)-dimethyl-L-lysyl(20)-[histone H4] + S-adenosyl-L-homocysteine + H(+). The catalysed reaction is N(6),N(6)-dimethyl-L-lysyl(20)-[histone H4] + S-adenosyl-L-methionine = N(6),N(6),N(6)-trimethyl-L-lysyl(20)-[histone H4] + S-adenosyl-L-homocysteine + H(+). In terms of biological role, protein-lysine N-methyltransferase involved in the regulation of cell quiescence by catalyzing the trimethylation of 'Lys-20' of histone H4 and 'Lys-79' of histone H3 (H4K20me3 and H3K79me3, respectively) during diapause formation, a state of obligate dormancy. The chain is SET domain-containing protein 4 from Artemia parthenogenetica (Brine shrimp).